A 101-amino-acid polypeptide reads, in one-letter code: Fructose-bisphosphate aldolase (101 aa).

Lysine 11 functions as the Schiff-base intermediate with dihydroxyacetone-P in the catalytic mechanism.

This sequence belongs to the class I fructose-bisphosphate aldolase family.

The catalysed reaction is beta-D-fructose 1,6-bisphosphate = D-glyceraldehyde 3-phosphate + dihydroxyacetone phosphate. It participates in carbohydrate degradation; glycolysis; D-glyceraldehyde 3-phosphate and glycerone phosphate from D-glucose: step 4/4. The protein is Fructose-bisphosphate aldolase of Lymnaea stagnalis (Great pond snail).